The sequence spans 84 residues: UPF0473 protein CLJ_B2791 (84 aa).

Belongs to the UPF0473 family.

The sequence is that of UPF0473 protein CLJ_B2791 from Clostridium botulinum (strain 657 / Type Ba4).